The following is a 140-amino-acid chain: Nucleoside diphosphate kinase (140 aa).

ATP is bound by residues Lys11, Phe59, Arg87, Thr93, Arg104, and Asn114. Residue His117 is the Pros-phosphohistidine intermediate of the active site.

The protein belongs to the NDK family. Homotetramer. It depends on Mg(2+) as a cofactor.

Its subcellular location is the cytoplasm. It carries out the reaction a 2'-deoxyribonucleoside 5'-diphosphate + ATP = a 2'-deoxyribonucleoside 5'-triphosphate + ADP. It catalyses the reaction a ribonucleoside 5'-diphosphate + ATP = a ribonucleoside 5'-triphosphate + ADP. Its function is as follows. Major role in the synthesis of nucleoside triphosphates other than ATP. The ATP gamma phosphate is transferred to the NDP beta phosphate via a ping-pong mechanism, using a phosphorylated active-site intermediate. This chain is Nucleoside diphosphate kinase, found in Bartonella henselae (strain ATCC 49882 / DSM 28221 / CCUG 30454 / Houston 1) (Rochalimaea henselae).